Here is a 396-residue protein sequence, read N- to C-terminus: Schizokinen exporter SchE (396 aa).

A signal peptide spans 1 to 25; the sequence is MLPKLILLATLYISQFIPTTFFIQA. Residues 26–39 are Cytoplasmic-facing; the sequence is LPVFMRQQKMSLDV. Residues 40–60 form a helical membrane-spanning segment; it reads IGFLGLLILPSGLKFLWSPFI. At 61 to 73 the chain is on the periplasmic side; it reads DRYRLGKLGHYRG. The helical transmembrane segment at 74–94 threads the bilayer; it reads WIICFQLLLISTMLVTAFIDI. The Cytoplasmic segment spans residues 95–104; sequence QDNLNAFLTC. The helical transmembrane segment at 105 to 127 threads the bilayer; sequence MFLASLFSSSQDIATDALAVNLL. Over 128–137 the chain is Periplasmic; it reads EPQERGLGNA. Residues 138–158 traverse the membrane as a helical segment; it reads IQSGGNIFGAIIGGGVMLILL. Over 159 to 162 the chain is Cytoplasmic; sequence DKIG. Residues 163-183 form a helical membrane-spanning segment; sequence WRYSLITLSIFMLINLVPILI. The Periplasmic segment spans residues 184–214; it reads YREKSQHQLENSTFFRSYFQPFISFLSRPKA. Residues 215–235 form a helical membrane-spanning segment; that stretch reads LPWLFVVLLYMMGDSVTSLMI. The Cytoplasmic portion of the chain corresponds to 236-251; the sequence is RPLLVDRGLSLPDIGW. A helical membrane pass occupies residues 252 to 272; sequence ILGIVSYSARIVSALIAGLVI. The Periplasmic portion of the chain corresponds to 273-281; the sequence is VKLGRIKSL. The helical transmembrane segment at 282 to 302 threads the bilayer; the sequence is IIFGFIADLTTLLYIIPAIGV. The Cytoplasmic segment spans residues 303–304; the sequence is SS. A helical transmembrane segment spans residues 305–325; sequence LLVLYTVCIIVNATQSMAYTA. Residues 326–346 lie on the Periplasmic side of the membrane; the sequence is LLSAMMDKCEKNTAATDYTMQ. A run of 2 helical transmembrane segments spans residues 347–367 and 368–388; these read VSVM…LATT and MGYS…VFLI. At 389–396 the chain is on the periplasmic side; the sequence is TQEYGVSS.

It belongs to the major facilitator superfamily.

Its subcellular location is the cell inner membrane. Involved in the TolC-like protein HgdD-dependent secretion of schizokinen, a dihydroxamate-type siderophore. Transports schizokinen from the cytoplasm to the periplasm. This chain is Schizokinen exporter SchE, found in Nostoc sp. (strain PCC 7120 / SAG 25.82 / UTEX 2576).